Reading from the N-terminus, the 119-residue chain is Ribonuclease P protein component (119 aa).

Belongs to the RnpA family. Consists of a catalytic RNA component (M1 or rnpB) and a protein subunit.

The enzyme catalyses Endonucleolytic cleavage of RNA, removing 5'-extranucleotides from tRNA precursor.. Its function is as follows. RNaseP catalyzes the removal of the 5'-leader sequence from pre-tRNA to produce the mature 5'-terminus. It can also cleave other RNA substrates such as 4.5S RNA. The protein component plays an auxiliary but essential role in vivo by binding to the 5'-leader sequence and broadening the substrate specificity of the ribozyme. The chain is Ribonuclease P protein component from Photorhabdus laumondii subsp. laumondii (strain DSM 15139 / CIP 105565 / TT01) (Photorhabdus luminescens subsp. laumondii).